Consider the following 183-residue polypeptide: RFKKIRRLGALPGLTSKRPRSGSDLKNQLRSGKRSQYRIRLEEKQKLRFHYGLTERQLLKYVHIAGKAKGSTGQILLQLLEMRLDNILFRLGMASTIPGARQLVNHRHILVNGRIVDIPSYRCKPRDIITTKNKQRSKALIQNFIASSPHQEELPNHLTIDPFQYKGLVNQIIDSKWIGLKIN.

The 62-residue stretch at 82-143 folds into the S4 RNA-binding domain; that stretch reads MRLDNILFRL…KQRSKALIQN (62 aa).

Belongs to the universal ribosomal protein uS4 family. Part of the 30S ribosomal subunit. Contacts protein S5. The interaction surface between S4 and S5 is involved in control of translational fidelity.

It localises to the plastid. Its subcellular location is the chloroplast. Its function is as follows. One of the primary rRNA binding proteins, it binds directly to 16S rRNA where it nucleates assembly of the body of the 30S subunit. With S5 and S12 plays an important role in translational accuracy. This is Small ribosomal subunit protein uS4c (rps4) from Gladiolus communis (Cornflag).